The sequence spans 131 residues: RxLR effector protein 62 (131 aa).

The N-terminal stretch at 1-19 is a signal peptide; the sequence is MRLDILLFTLSSSTSLALS. The short motif at 49 to 60 is the RxLR-dEER element; the sequence is RHLREEPANEAR. Residue N61 is glycosylated (N-linked (GlcNAc...) asparagine).

The protein belongs to the RxLR effector family.

It localises to the secreted. It is found in the host cell. In terms of biological role, secreted effector that suppresses callose deposition, a hallmark of pathogen-associated molecular pattern (PAMP)-triggered immunity (PTI) and renders host plants more susceptible to bacterial infection. Reduces host plant responsiveness to salicylic acid (SA) in haustoriated cells into which host-translocated effectors are delivered. The protein is RxLR effector protein 62 of Hyaloperonospora arabidopsidis (strain Emoy2) (Downy mildew agent).